Reading from the N-terminus, the 200-residue chain is dITP/XTP pyrophosphatase (200 aa).

5-10 (TRNEGK) serves as a coordination point for substrate. Catalysis depends on Asp-67, which acts as the Proton acceptor. Asp-67 lines the Mg(2+) pocket. Substrate contacts are provided by residues Ser-68, 151–154 (FGYD), Lys-174, and 179–180 (HR).

Belongs to the HAM1 NTPase family. In terms of assembly, homodimer. Requires Mg(2+) as cofactor.

The catalysed reaction is XTP + H2O = XMP + diphosphate + H(+). It carries out the reaction dITP + H2O = dIMP + diphosphate + H(+). The enzyme catalyses ITP + H2O = IMP + diphosphate + H(+). In terms of biological role, pyrophosphatase that catalyzes the hydrolysis of nucleoside triphosphates to their monophosphate derivatives, with a high preference for the non-canonical purine nucleotides XTP (xanthosine triphosphate), dITP (deoxyinosine triphosphate) and ITP. Seems to function as a house-cleaning enzyme that removes non-canonical purine nucleotides from the nucleotide pool, thus preventing their incorporation into DNA/RNA and avoiding chromosomal lesions. The protein is dITP/XTP pyrophosphatase of Streptococcus pneumoniae serotype 4 (strain ATCC BAA-334 / TIGR4).